Reading from the N-terminus, the 499-residue chain is NAD(P)H-quinone oxidoreductase chain 4, chloroplastic (499 aa).

14 helical membrane passes run 4 to 24 (FPWLTLIVVFPIAAGSLIFFL), 35 to 55 (YTIYICVLELLLTTYAFCYNF), 84 to 104 (GLSIGPILLTGFITTLATLAA), 111 to 129 (SRLFHFLMLAMYSGQIGSF), 134 to 154 (LLLFFIMWELELIPVYLLLSV), 167 to 187 (FILYTAGGSVFLLIGVLGIGL), 208 to 228 (ALEIIFYIGFFIAFAVKLPII), 242 to 262 (HYSTCMLLAGILLKMGAYGLI), 272 to 292 (AHSIFSPWFMIVGTVQIIYAA), 305 to 325 (IAYSSVSHMGFIILGIGSITD), 330 to 350 (GAVLQIISHGLISAALFFLAG), 386 to 406 (LALPGMSGFVAELIVFFGIIT), 416 to 436 (IVITFVMAIGMILTPIYSLSM), and 462 to 482 (LFVLISILLPVIGIGIYPDFV).

This sequence belongs to the complex I subunit 4 family.

It is found in the plastid. Its subcellular location is the chloroplast thylakoid membrane. The enzyme catalyses a plastoquinone + NADH + (n+1) H(+)(in) = a plastoquinol + NAD(+) + n H(+)(out). It catalyses the reaction a plastoquinone + NADPH + (n+1) H(+)(in) = a plastoquinol + NADP(+) + n H(+)(out). In Citrus sinensis (Sweet orange), this protein is NAD(P)H-quinone oxidoreductase chain 4, chloroplastic.